A 149-amino-acid polypeptide reads, in one-letter code: Arginine regulator (149 aa).

This sequence belongs to the ArgR family.

The protein resides in the cytoplasm. It functions in the pathway amino-acid degradation; L-arginine degradation via ADI pathway. In terms of biological role, regulates the transcription of the arc operon, involved in arginine catabolism. The sequence is that of Arginine regulator (argR1) from Bacillus cereus (strain ATCC 10987 / NRS 248).